The chain runs to 731 residues: Golgin subfamily A member 5 (731 aa).

Position 2 is an N-acetylserine (Ser-2). Over 2–698 (SWFVDLAGKA…IFLRRYPIAR (697 aa)) the chain is Cytoplasmic. Arg-89 bears the Dimethylated arginine mark. The disordered stretch occupies residues 93 to 222 (EASHPVENAS…PTPNDDGKSH (130 aa)). Position 116 is a phosphoserine (Ser-116). The span at 134 to 146 (PTGRVEIRKEKGK) shows a compositional bias: basic and acidic residues. The segment covering 147 to 167 (TPVFQSSQTSSVSSVNPSVTT) has biased composition (low complexity). The span at 173–188 (ENSFGSQTHEAASNSD) shows a compositional bias: polar residues. Residues 189-199 (SSHEGQEESSK) show a composition bias toward basic and acidic residues. The stretch at 216 to 632 (NDDGKSHELS…EQQMNSASGS (417 aa)) forms a coiled coil. The chain crosses the membrane as a helical; Anchor for type IV membrane protein span at residues 699–719 (VFVIIYMALLHLWVMIVLLTY). The Lumenal segment spans residues 720–731 (TPEMHHDQPYGK).

In terms of assembly, homodimer. Interacts with RAB1A that has been activated by GTP-binding, and possibly also with OCRL1. Interacts with isoform CASP of CUX1. Highly phosphorylated during mitosis. Phosphorylation is barely detectable during interphase. As to expression, ubiquitous. Highly expressed in seminiferous tubules and Leydig cells in testis, and detected at much lower levels in the other tissues tested. Expression is very low or not detectable in spermatozoa.

The protein localises to the golgi apparatus membrane. Involved in maintaining Golgi structure. Stimulates the formation of Golgi stacks and ribbons. Involved in intra-Golgi retrograde transport. The chain is Golgin subfamily A member 5 (GOLGA5) from Homo sapiens (Human).